The primary structure comprises 162 residues: Ribosome maturation factor RimP (162 aa).

Belongs to the RimP family.

The protein resides in the cytoplasm. Its function is as follows. Required for maturation of 30S ribosomal subunits. The polypeptide is Ribosome maturation factor RimP (Ralstonia pickettii (strain 12J)).